A 332-amino-acid polypeptide reads, in one-letter code: Heptahelical transmembrane protein 1 (332 aa).

Residues methionine 1–lysine 52 are disordered. At methionine 1–asparagine 98 the chain is on the cytoplasmic side. Positions proline 26 to glycine 37 are enriched in basic and acidic residues. Positions threonine 38–lysine 52 are enriched in basic residues. A helical membrane pass occupies residues valine 99–histidine 119. Residues histidine 120–proline 138 are Extracellular-facing. Residues phenylalanine 139–phenylalanine 159 traverse the membrane as a helical segment. At cysteine 160–arginine 172 the chain is on the cytoplasmic side. A helical membrane pass occupies residues isoleucine 173 to isoleucine 193. The Extracellular segment spans residues phenylalanine 194 to arginine 199. The helical transmembrane segment at tryptophan 200–phenylalanine 220 threads the bilayer. Topologically, residues threonine 221–arginine 233 are cytoplasmic. A helical membrane pass occupies residues alanine 234 to valine 254. Over asparagine 255–asparagine 262 the chain is Extracellular. A helical membrane pass occupies residues valine 263–valine 283. Residues glycine 284–glutamine 303 are Cytoplasmic-facing. The chain crosses the membrane as a helical span at residues isoleucine 304–leucine 324. The Extracellular segment spans residues aspartate 325 to cysteine 332.

Belongs to the ADIPOR family. As to quaternary structure, interacts (via N-terminus) with SCRM/ICE1. Expressed in roots, hypocotyls, vasculature of cotyledons and leaves, hydathodes and guard cells. In reproductive organs, expressed in trichomes, veins of sepals, stamens and stigmata of pistils.

Its subcellular location is the membrane. In terms of biological role, may act as a negative regulator of abscisic acid (ABA)-mediated osmotic stress signaling and function in cross-talk between cold and osmotic signaling. The protein is Heptahelical transmembrane protein 1 (HHP1) of Arabidopsis thaliana (Mouse-ear cress).